A 324-amino-acid polypeptide reads, in one-letter code: MDGLEENGSVVQVGDLLPCKICGRTFFPLALKKHGPICQKTATKKRKTFDSSRQRAEGTDIPTVKPLKPRPEPPKKPSNWRRKHEEFIATIRAAKGLDQALKEGGKLPPPPPPSYDPDYIQCPYCQRRFNENAADRHINFCKEQAARISNKGKFSTDSKGKPASRPQYKPSPLKKSNPPGIPSSGSSRLPQPSTTSKTIVGVPTGKASSVNSPLGNKPQTLSPSHRAIAAPQAGANTKARNTTPPSLARNSVAGVLTNKRKTLTENYAARPDGDYTSSVNGGNSKGIEGNSSGHLPKFCHECGTKYPVEWAKFCCECGIRRMIL.

The C2HC/C3H-type 1 zinc finger occupies 15 to 44 (DLLPCKICGRTFFPLALKKHGPICQKTATK). Zn(2+)-binding residues include Cys-19, Cys-22, His-34, and Cys-38. Residues 43–83 (TKKRKTFDSSRQRAEGTDIPTVKPLKPRPEPPKKPSNWRRK) form a disordered region. A compositionally biased stretch (basic and acidic residues) spans 48–58 (TFDSSRQRAEG). The C2HC/C3H-type 2 zinc finger occupies 118 to 147 (DYIQCPYCQRRFNENAADRHINFCKEQAAR). Zn(2+) is bound by residues Cys-122, Cys-125, His-137, and Cys-141. The disordered stretch occupies residues 149–225 (SNKGKFSTDS…NKPQTLSPSH (77 aa)). Low complexity predominate over residues 176–187 (SNPPGIPSSGSS). Polar residues-rich tracts occupy residues 188-198 (RLPQPSTTSKT) and 206-223 (KASS…TLSP). Phosphoserine is present on Ser-222. The residue at position 243 (Thr-243) is a Phosphothreonine. Residue Ser-291 is modified to Phosphoserine.

This sequence belongs to the ZC2HC1 family. Zn(2+) is required as a cofactor.

This chain is Zinc finger C2HC domain-containing protein 1A (Zc2hc1a), found in Mus musculus (Mouse).